Here is a 272-residue protein sequence, read N- to C-terminus: Shikimate dehydrogenase (NADP(+)) (272 aa).

Shikimate-binding positions include 14–16 (SKS) and T61. Residue K65 is the Proton acceptor of the active site. E77 serves as a coordination point for NADP(+). Shikimate is bound by residues N86 and D102. NADP(+)-binding positions include 126-130 (GAGGA), 149-154 (NRTVSR), and M213. Y215 serves as a coordination point for shikimate. G237 contributes to the NADP(+) binding site.

Belongs to the shikimate dehydrogenase family. As to quaternary structure, homodimer.

It carries out the reaction shikimate + NADP(+) = 3-dehydroshikimate + NADPH + H(+). It functions in the pathway metabolic intermediate biosynthesis; chorismate biosynthesis; chorismate from D-erythrose 4-phosphate and phosphoenolpyruvate: step 4/7. Its function is as follows. Involved in the biosynthesis of the chorismate, which leads to the biosynthesis of aromatic amino acids. Catalyzes the reversible NADPH linked reduction of 3-dehydroshikimate (DHSA) to yield shikimate (SA). The sequence is that of Shikimate dehydrogenase (NADP(+)) from Escherichia coli (strain SMS-3-5 / SECEC).